The sequence spans 296 residues: MFS-type transporter pytF (296 aa).

7 helical membrane-spanning segments follow: residues 30–50, 72–92, 98–118, 124–144, 157–177, 180–200, and 238–258; these read WLVV…LNSF, WIGS…GPVF, KVLF…VSLC, FILA…YPTI, LAMG…PLIL, LFAV…SFAL, and VVGM…IPLF. N-linked (GlcNAc...) asparagine glycosylation is present at asparagine 265. The helical transmembrane segment at 271–291 threads the bilayer; it reads SLISILNAGSFVGRIVSGALA.

This sequence belongs to the major facilitator superfamily. Monocarboxylate porter (TC 2.A.1.13) family.

The protein localises to the cell membrane. MFS-type transporter; part of the gene cluster that mediates the biosynthesis of pyranterreones, a family of antioxidative compounds. Directly involved in the secretion of pyranterreones. The protein is MFS-type transporter pytF of Aspergillus terreus (strain NIH 2624 / FGSC A1156).